The chain runs to 151 residues: D-aminoacyl-tRNA deacylase (151 aa).

Residues 136-137 (GP) carry the Gly-cisPro motif, important for rejection of L-amino acids motif.

Belongs to the DTD family. In terms of assembly, homodimer.

It localises to the cytoplasm. It carries out the reaction glycyl-tRNA(Ala) + H2O = tRNA(Ala) + glycine + H(+). The catalysed reaction is a D-aminoacyl-tRNA + H2O = a tRNA + a D-alpha-amino acid + H(+). Its function is as follows. An aminoacyl-tRNA editing enzyme that deacylates mischarged D-aminoacyl-tRNAs. Also deacylates mischarged glycyl-tRNA(Ala), protecting cells against glycine mischarging by AlaRS. Acts via tRNA-based rather than protein-based catalysis; rejects L-amino acids rather than detecting D-amino acids in the active site. By recycling D-aminoacyl-tRNA to D-amino acids and free tRNA molecules, this enzyme counteracts the toxicity associated with the formation of D-aminoacyl-tRNA entities in vivo and helps enforce protein L-homochirality. This chain is D-aminoacyl-tRNA deacylase, found in Lactococcus lactis subsp. cremoris (strain SK11).